The sequence spans 198 residues: Segregation and condensation protein B (198 aa).

This sequence belongs to the ScpB family. Homodimer. Homodimerization may be required to stabilize the binding of ScpA to the Smc head domains. Component of a cohesin-like complex composed of ScpA, ScpB and the Smc homodimer, in which ScpA and ScpB bind to the head domain of Smc. The presence of the three proteins is required for the association of the complex with DNA.

The protein resides in the cytoplasm. Its function is as follows. Participates in chromosomal partition during cell division. May act via the formation of a condensin-like complex containing Smc and ScpA that pull DNA away from mid-cell into both cell halves. The polypeptide is Segregation and condensation protein B (Acetivibrio thermocellus (strain ATCC 27405 / DSM 1237 / JCM 9322 / NBRC 103400 / NCIMB 10682 / NRRL B-4536 / VPI 7372) (Clostridium thermocellum)).